The primary structure comprises 424 residues: Carbohydrate sulfotransferase 8 (424 aa).

Over Met-1 to Leu-10 the chain is Cytoplasmic. Residues Ala-11–Leu-31 form a helical; Signal-anchor for type II membrane protein membrane-spanning segment. At Gln-32–Tyr-424 the chain is on the lumenal side. The disordered stretch occupies residues Phe-47–Leu-107. Residues Gly-66–Arg-77 show a composition bias toward basic and acidic residues. A glycan (N-linked (GlcNAc...) asparagine) is linked at Asn-128. Residues Pro-198–Asn-204 and Arg-258–Ser-266 contribute to the 3'-phosphoadenylyl sulfate site. Asn-294, Asn-367, and Asn-415 each carry an N-linked (GlcNAc...) asparagine glycan.

This sequence belongs to the sulfotransferase 2 family. Predominantly expressed in pituitary gland. In brain, it is expressed in pituitary gland, cerebellum, medulla oblongata, pons, thalamus and spinal cord. Expressed in the epidermis. Expressed at lower level in lung, spleen, adrenal gland, placenta, prostate, testis, mammary gland and trachea.

The protein localises to the golgi apparatus membrane. Catalyzes the transfer of sulfate to position 4 of non-reducing N-acetylgalactosamine (GalNAc) residues in both N-glycans and O-glycans. Required for biosynthesis of glycoprotein hormones lutropin and thyrotropin, by mediating sulfation of their carbohydrate structures. Only active against terminal GalNAcbeta1,GalNAcbeta. Not active toward chondroitin. This Homo sapiens (Human) protein is Carbohydrate sulfotransferase 8 (CHST8).